A 677-amino-acid chain; its full sequence is Methionine--tRNA ligase (677 aa).

Positions Pro15–His25 match the 'HIGH' region motif. Zn(2+) is bound by residues Cys146, Cys149, Cys159, and Cys162. The 'KMSKS' region signature appears at Lys332–Ser336. Position 335 (Lys335) interacts with ATP. Residues Asp576–Met677 form the tRNA-binding domain.

The protein belongs to the class-I aminoacyl-tRNA synthetase family. MetG type 1 subfamily. In terms of assembly, homodimer. Zn(2+) serves as cofactor.

It is found in the cytoplasm. The catalysed reaction is tRNA(Met) + L-methionine + ATP = L-methionyl-tRNA(Met) + AMP + diphosphate. Functionally, is required not only for elongation of protein synthesis but also for the initiation of all mRNA translation through initiator tRNA(fMet) aminoacylation. In Idiomarina loihiensis (strain ATCC BAA-735 / DSM 15497 / L2-TR), this protein is Methionine--tRNA ligase.